The chain runs to 98 residues: Integration host factor subunit alpha (98 aa).

Residues Phe-52–Ile-71 form a disordered region.

Belongs to the bacterial histone-like protein family. In terms of assembly, heterodimer of an alpha and a beta chain.

In terms of biological role, this protein is one of the two subunits of integration host factor, a specific DNA-binding protein that functions in genetic recombination as well as in transcriptional and translational control. This is Integration host factor subunit alpha from Photorhabdus laumondii subsp. laumondii (strain DSM 15139 / CIP 105565 / TT01) (Photorhabdus luminescens subsp. laumondii).